A 307-amino-acid chain; its full sequence is Pantothenate kinase (307 aa).

90 to 97 (GSVAVGKS) is an ATP binding site.

The protein belongs to the prokaryotic pantothenate kinase family.

It is found in the cytoplasm. It catalyses the reaction (R)-pantothenate + ATP = (R)-4'-phosphopantothenate + ADP + H(+). It participates in cofactor biosynthesis; coenzyme A biosynthesis; CoA from (R)-pantothenate: step 1/5. This is Pantothenate kinase from Limosilactobacillus reuteri subsp. reuteri (strain JCM 1112) (Lactobacillus reuteri).